We begin with the raw amino-acid sequence, 167 residues long: NAD(P)H-quinone oxidoreductase subunit I, chloroplastic (167 aa).

4Fe-4S ferredoxin-type domains are found at residues 55–84 (GRIHFEFDKCIACEVCVRVCPIDLPVVDWK) and 95–124 (LNYSIDFGICIFCGNCVEYCPTNCLSMTEE). 8 residues coordinate [4Fe-4S] cluster: Cys-64, Cys-67, Cys-70, Cys-74, Cys-104, Cys-107, Cys-110, and Cys-114.

Belongs to the complex I 23 kDa subunit family. NDH is composed of at least 16 different subunits, 5 of which are encoded in the nucleus. Requires [4Fe-4S] cluster as cofactor.

Its subcellular location is the plastid. It is found in the chloroplast thylakoid membrane. It carries out the reaction a plastoquinone + NADH + (n+1) H(+)(in) = a plastoquinol + NAD(+) + n H(+)(out). The enzyme catalyses a plastoquinone + NADPH + (n+1) H(+)(in) = a plastoquinol + NADP(+) + n H(+)(out). In terms of biological role, NDH shuttles electrons from NAD(P)H:plastoquinone, via FMN and iron-sulfur (Fe-S) centers, to quinones in the photosynthetic chain and possibly in a chloroplast respiratory chain. The immediate electron acceptor for the enzyme in this species is believed to be plastoquinone. Couples the redox reaction to proton translocation, and thus conserves the redox energy in a proton gradient. The polypeptide is NAD(P)H-quinone oxidoreductase subunit I, chloroplastic (Arabis hirsuta (Hairy rock-cress)).